Reading from the N-terminus, the 250-residue chain is MAGNKVETFLKSELKKKNALLFVLIDSEVSNLEASAKLAKDVEKIGASAILVGGSSATDQIEMAQVVKGIKKGIKIPIILFPGNVTGVVPDADAILFSSLMNSENPYFITQAQALGAPSVLKFGLEPLPTAYLVIGDGTTAWFVGSARGIPFEKPKIAAAYALAAQFLGMRFVYLEAGSGAKSSVTPEMVKTVRQLFNGFLIVGGGIKDVKTAQNLVKAGADALVIGTFLEKGGSLKKLEEITKAIQRSK.

Mg(2+) is bound by residues aspartate 26 and serine 55. Residues 174–180 (YLEAGSG), 205–206 (GG), and 227–228 (GT) each bind sn-glycerol 1-phosphate.

The protein belongs to the GGGP/HepGP synthase family. Group II subfamily. Mg(2+) is required as a cofactor.

Its subcellular location is the cytoplasm. It catalyses the reaction sn-glycerol 1-phosphate + (2E,6E,10E)-geranylgeranyl diphosphate = sn-3-O-(geranylgeranyl)glycerol 1-phosphate + diphosphate. It participates in membrane lipid metabolism; glycerophospholipid metabolism. Its function is as follows. Prenyltransferase that catalyzes the transfer of the geranylgeranyl moiety of geranylgeranyl diphosphate (GGPP) to the C3 hydroxyl of sn-glycerol-1-phosphate (G1P). This reaction is the first ether-bond-formation step in the biosynthesis of archaeal membrane lipids. The protein is Geranylgeranylglyceryl phosphate synthase of Nitrosopumilus maritimus (strain SCM1).